Consider the following 317-residue polypeptide: Type II restriction enzyme NaeI (317 aa).

Homodimer.

It carries out the reaction Endonucleolytic cleavage of DNA to give specific double-stranded fragments with terminal 5'-phosphates.. An E and P subtype restriction enzyme that recognizes the double-stranded unmethylated sequence 5'-GCCGGC-3' and cleaves after C-3. The chain is Type II restriction enzyme NaeI from Lentzea aerocolonigenes (Lechevalieria aerocolonigenes).